The sequence spans 460 residues: Cysteine--tRNA ligase (460 aa).

Cys28 contributes to the Zn(2+) binding site. A 'HIGH' region motif is present at residues 30–40 (VTIYDLCHIGH). Positions 209, 234, and 238 each coordinate Zn(2+). The short motif at 266 to 270 (KMSKS) is the 'KMSKS' region element. Lys269 is a binding site for ATP.

The protein belongs to the class-I aminoacyl-tRNA synthetase family. As to quaternary structure, monomer. Zn(2+) is required as a cofactor.

The protein localises to the cytoplasm. It carries out the reaction tRNA(Cys) + L-cysteine + ATP = L-cysteinyl-tRNA(Cys) + AMP + diphosphate. The sequence is that of Cysteine--tRNA ligase from Vibrio parahaemolyticus serotype O3:K6 (strain RIMD 2210633).